The sequence spans 365 residues: tRNA dimethylallyltransferase (365 aa).

23 to 30 (APTASGKT) is a binding site for ATP. Residue 25 to 30 (TASGKT) participates in substrate binding. Interaction with substrate tRNA regions lie at residues 48 to 51 (DSAL), 172 to 176 (QRITR), and 256 to 261 (RCVGYR).

This sequence belongs to the IPP transferase family. In terms of assembly, monomer. Requires Mg(2+) as cofactor.

It carries out the reaction adenosine(37) in tRNA + dimethylallyl diphosphate = N(6)-dimethylallyladenosine(37) in tRNA + diphosphate. Its function is as follows. Catalyzes the transfer of a dimethylallyl group onto the adenine at position 37 in tRNAs that read codons beginning with uridine, leading to the formation of N6-(dimethylallyl)adenosine (i(6)A). This chain is tRNA dimethylallyltransferase, found in Psychrobacter sp. (strain PRwf-1).